Consider the following 258-residue polypeptide: Transmembrane O-methyltransferase homolog (258 aa).

Residues Glu104, 106 to 107, Ser112, Glu130, and Ser160 contribute to the S-adenosyl-L-methionine site; that span reads GT.

The protein belongs to the class I-like SAM-binding methyltransferase superfamily. Cation-dependent O-methyltransferase family. As to quaternary structure, interacts with LHFPL5, PCDH15, TMC1, TMC2 and TMIE. The interaction of TOMT with TMC1 and TMC2 is required for the transportation of TMC1/2 into the stereocilia of hair cells. Interacts directly with TMC1. Widely expressed with high levels in outer and inner hair cells of the cochlea and vestibule.

It is found in the cytoplasm. Its subcellular location is the endoplasmic reticulum. The catalysed reaction is a catechol + S-adenosyl-L-methionine = a guaiacol + S-adenosyl-L-homocysteine + H(+). Functionally, catalyzes the O-methylation, and thereby the inactivation, of catecholamine neurotransmitters and catechol hormones. Required for auditory function. Component of the cochlear hair cell's mechanotransduction (MET) machinery. Involved in the assembly of the asymmetric tip-link MET complex. Required for transportation of TMC1 and TMC2 proteins into the mechanically sensitive stereocilia of the hair cells. The function in MET is independent of the enzymatic activity. This is Transmembrane O-methyltransferase homolog from Mus musculus (Mouse).